We begin with the raw amino-acid sequence, 589 residues long: Oligo-1,6-glucosidase IMA2 (589 aa).

Asp215 functions as the Nucleophile in the catalytic mechanism. Glu277 acts as the Proton donor in catalysis.

This sequence belongs to the glycosyl hydrolase 13 family.

The enzyme catalyses Hydrolysis of (1-&gt;6)-alpha-D-glucosidic linkages in some oligosaccharides produced from starch and glycogen by alpha-amylase, and in isomaltose.. Alpha-glucosidase with specificity for isomaltase, methyl-alpha-glucoside, and palatinose. The polypeptide is Oligo-1,6-glucosidase IMA2 (IMA2) (Saccharomyces cerevisiae (strain ATCC 204508 / S288c) (Baker's yeast)).